A 139-amino-acid polypeptide reads, in one-letter code: Cystatin-11 (139 aa).

The first 28 residues, 1–28 (MAAGSWKATRLLLAILVALVAFSYQVKR), serve as a signal peptide directing secretion. 2 disulfide bridges follow: C94–C102 and C115–C135. N134 carries N-linked (GlcNAc...) asparagine glycosylation.

Belongs to the cystatin family. As to expression, expressed in epididymis, where it localizes to the proximal caput and also part of the midcaput. Not detected in other tissues tested.

The protein resides in the secreted. Its function is as follows. Has antibacterial activity against the Gram-negative bacteria E.coli. May play a role in sperm maturation and fertilization. In Mus musculus (Mouse), this protein is Cystatin-11.